The sequence spans 360 residues: MGQRTLLYDLHLALGAKTVDFGGWDMPLHYGSQVEEHHQVRSDCGVFDVSHMTVIDVDGTDATVWLQRLLANDVARLDDPGKALYSPLLNEQGGVIDDLIVYRTETGYRLVTNAATRAKVLDWLQLQRAGFSVDFQVRPDLAILAIQGPRAREKVAALLSPARAALIRELRPFEGVADGDWFIARTGYTGEDGLEIIFPGDQAVAFFNDLVGAGIAPSGLGARDTLRLEAGMNLYGQDIDENHTPLTSNLGWSIAWEPAERNFIGRVGLLAEIEHGVQEKLVGLVLEERGVLRAHQVVRVAGIGEGEITSGSFSPTLSKSIALARVPMATGDRAEVEIRGKWYPVRVVKPTFVRHGKILI.

It belongs to the GcvT family. The glycine cleavage system is composed of four proteins: P, T, L and H.

It carries out the reaction N(6)-[(R)-S(8)-aminomethyldihydrolipoyl]-L-lysyl-[protein] + (6S)-5,6,7,8-tetrahydrofolate = N(6)-[(R)-dihydrolipoyl]-L-lysyl-[protein] + (6R)-5,10-methylene-5,6,7,8-tetrahydrofolate + NH4(+). In terms of biological role, the glycine cleavage system catalyzes the degradation of glycine. The polypeptide is Aminomethyltransferase (Pseudomonas putida (strain ATCC 47054 / DSM 6125 / CFBP 8728 / NCIMB 11950 / KT2440)).